The chain runs to 378 residues: Chaperone protein DnaJ (378 aa).

The 65-residue stretch at 5-69 folds into the J domain; the sequence is DYYEVLGVSK…NKRANYDQFG (65 aa). The CR-type zinc-finger motif lies at 135-217; the sequence is GSEKEISIRK…CHGKGTENKN (83 aa). Residues C148, C151, C165, C168, C191, C194, C205, and C208 each contribute to the Zn(2+) site. CXXCXGXG motif repeat units lie at residues 148-155, 165-172, 191-198, and 205-212; these read CHTCDGEG, CHYCNGSG, CPVCSGSG, and CPTCHGKG.

This sequence belongs to the DnaJ family. In terms of assembly, homodimer. Zn(2+) serves as cofactor.

Its subcellular location is the cytoplasm. Functionally, participates actively in the response to hyperosmotic and heat shock by preventing the aggregation of stress-denatured proteins and by disaggregating proteins, also in an autonomous, DnaK-independent fashion. Unfolded proteins bind initially to DnaJ; upon interaction with the DnaJ-bound protein, DnaK hydrolyzes its bound ATP, resulting in the formation of a stable complex. GrpE releases ADP from DnaK; ATP binding to DnaK triggers the release of the substrate protein, thus completing the reaction cycle. Several rounds of ATP-dependent interactions between DnaJ, DnaK and GrpE are required for fully efficient folding. Also involved, together with DnaK and GrpE, in the DNA replication of plasmids through activation of initiation proteins. In Staphylococcus saprophyticus subsp. saprophyticus (strain ATCC 15305 / DSM 20229 / NCIMB 8711 / NCTC 7292 / S-41), this protein is Chaperone protein DnaJ.